The primary structure comprises 287 residues: 4-hydroxybenzoate octaprenyltransferase (287 aa).

The next 9 membrane-spanning stretches (helical) occupy residues 7-27 (FISYGYLIRLDKPIGTLLLLW), 30-50 (LWALWLASSGVLDLSILLIFV), 94-114 (VAVASFLALCAFLLIQPLNAF), 118-138 (LSVLALLVAFIYPFTKRFFAM), 142-162 (VLGIAFGFGIPMAYAAILDFI), 167-187 (WFLFTGNIFWAIAYDTAYAMV), 209-229 (VVVIAISYGMLFLSHLWVAQL), 235-255 (YFLVGWFAALACAIYHLKLVS), and 266-286 (FRHNNWLGGFLFLGIVLGLGV).

It belongs to the UbiA prenyltransferase family. Mg(2+) serves as cofactor.

It is found in the cell inner membrane. It carries out the reaction all-trans-octaprenyl diphosphate + 4-hydroxybenzoate = 4-hydroxy-3-(all-trans-octaprenyl)benzoate + diphosphate. It functions in the pathway cofactor biosynthesis; ubiquinone biosynthesis. In terms of biological role, catalyzes the prenylation of para-hydroxybenzoate (PHB) with an all-trans polyprenyl group. Mediates the second step in the final reaction sequence of ubiquinone-8 (UQ-8) biosynthesis, which is the condensation of the polyisoprenoid side chain with PHB, generating the first membrane-bound Q intermediate 3-octaprenyl-4-hydroxybenzoate. The polypeptide is 4-hydroxybenzoate octaprenyltransferase (Polynucleobacter necessarius subsp. necessarius (strain STIR1)).